Reading from the N-terminus, the 95-residue chain is Small ribosomal subunit protein bS16 (95 aa).

Belongs to the bacterial ribosomal protein bS16 family.

The sequence is that of Small ribosomal subunit protein bS16 from Thermotoga maritima (strain ATCC 43589 / DSM 3109 / JCM 10099 / NBRC 100826 / MSB8).